A 520-amino-acid chain; its full sequence is 2-isopropylmalate synthase (520 aa).

Residues 12 to 274 form the Pyruvate carboxyltransferase domain; it reads IRIFDTTLRD…DSAINTPRIV (263 aa). 4 residues coordinate Mn(2+): D21, H209, H211, and N245. The segment at 396–520 is regulatory domain; sequence RLASMTISDV…VIAGKTAAVA (125 aa).

Belongs to the alpha-IPM synthase/homocitrate synthase family. LeuA type 1 subfamily. In terms of assembly, homodimer. It depends on Mn(2+) as a cofactor.

Its subcellular location is the cytoplasm. It carries out the reaction 3-methyl-2-oxobutanoate + acetyl-CoA + H2O = (2S)-2-isopropylmalate + CoA + H(+). It functions in the pathway amino-acid biosynthesis; L-leucine biosynthesis; L-leucine from 3-methyl-2-oxobutanoate: step 1/4. Catalyzes the condensation of the acetyl group of acetyl-CoA with 3-methyl-2-oxobutanoate (2-ketoisovalerate) to form 3-carboxy-3-hydroxy-4-methylpentanoate (2-isopropylmalate). The protein is 2-isopropylmalate synthase of Xanthomonas oryzae pv. oryzae (strain KACC10331 / KXO85).